The following is a 362-amino-acid chain: Phosphoserine aminotransferase (362 aa).

Residues serine 9 and arginine 42 each coordinate L-glutamate. Pyridoxal 5'-phosphate is bound by residues 76-77 (GR), tryptophan 102, threonine 153, aspartate 174, and glutamine 197. Lysine 198 is subject to N6-(pyridoxal phosphate)lysine. Residue 239–240 (NT) participates in pyridoxal 5'-phosphate binding.

This sequence belongs to the class-V pyridoxal-phosphate-dependent aminotransferase family. SerC subfamily. In terms of assembly, homodimer. Pyridoxal 5'-phosphate serves as cofactor.

The protein localises to the cytoplasm. The enzyme catalyses O-phospho-L-serine + 2-oxoglutarate = 3-phosphooxypyruvate + L-glutamate. The catalysed reaction is 4-(phosphooxy)-L-threonine + 2-oxoglutarate = (R)-3-hydroxy-2-oxo-4-phosphooxybutanoate + L-glutamate. It functions in the pathway amino-acid biosynthesis; L-serine biosynthesis; L-serine from 3-phospho-D-glycerate: step 2/3. The protein operates within cofactor biosynthesis; pyridoxine 5'-phosphate biosynthesis; pyridoxine 5'-phosphate from D-erythrose 4-phosphate: step 3/5. In terms of biological role, catalyzes the reversible conversion of 3-phosphohydroxypyruvate to phosphoserine and of 3-hydroxy-2-oxo-4-phosphonooxybutanoate to phosphohydroxythreonine. This is Phosphoserine aminotransferase from Escherichia coli O157:H7.